Consider the following 93-residue polypeptide: Large ribosomal subunit protein uL23cz/uL23cy (93 aa).

It belongs to the universal ribosomal protein uL23 family. Part of the 50S ribosomal subunit.

Its subcellular location is the plastid. The protein localises to the chloroplast. Functionally, binds to 23S rRNA. The chain is Large ribosomal subunit protein uL23cz/uL23cy (rpl23-A) from Atropa belladonna (Belladonna).